The primary structure comprises 471 residues: Argininosuccinate lyase (471 aa).

This sequence belongs to the lyase 1 family. Argininosuccinate lyase subfamily.

Its subcellular location is the cytoplasm. The catalysed reaction is 2-(N(omega)-L-arginino)succinate = fumarate + L-arginine. It participates in amino-acid biosynthesis; L-arginine biosynthesis; L-arginine from L-ornithine and carbamoyl phosphate: step 3/3. This is Argininosuccinate lyase from Ralstonia pickettii (strain 12J).